A 453-amino-acid polypeptide reads, in one-letter code: Bifunctional protein GlmU (453 aa).

A pyrophosphorylase region spans residues 1–225 (MNIVILAAGT…EWETLGVNSK (225 aa)). UDP-N-acetyl-alpha-D-glucosamine is bound by residues 6 to 9 (LAAG), K20, Q71, 76 to 77 (GT), 98 to 100 (YGD), G135, E150, N165, and N223. Residue D100 coordinates Mg(2+). N223 provides a ligand contact to Mg(2+). The interval 226–246 (AQLAELERIHQRTIADALLVD) is linker. Residues 247-453 (GVTLADPARV…GYVRPVKKKS (207 aa)) form an N-acetyltransferase region. UDP-N-acetyl-alpha-D-glucosamine-binding residues include R329 and K347. Residue H359 is the Proton acceptor of the active site. UDP-N-acetyl-alpha-D-glucosamine contacts are provided by Y362 and N373. Acetyl-CoA contacts are provided by residues A376, 382 to 383 (NY), S401, and A419.

It in the N-terminal section; belongs to the N-acetylglucosamine-1-phosphate uridyltransferase family. The protein in the C-terminal section; belongs to the transferase hexapeptide repeat family. As to quaternary structure, homotrimer. Mg(2+) serves as cofactor.

The protein localises to the cytoplasm. It catalyses the reaction alpha-D-glucosamine 1-phosphate + acetyl-CoA = N-acetyl-alpha-D-glucosamine 1-phosphate + CoA + H(+). The enzyme catalyses N-acetyl-alpha-D-glucosamine 1-phosphate + UTP + H(+) = UDP-N-acetyl-alpha-D-glucosamine + diphosphate. The protein operates within nucleotide-sugar biosynthesis; UDP-N-acetyl-alpha-D-glucosamine biosynthesis; N-acetyl-alpha-D-glucosamine 1-phosphate from alpha-D-glucosamine 6-phosphate (route II): step 2/2. Its pathway is nucleotide-sugar biosynthesis; UDP-N-acetyl-alpha-D-glucosamine biosynthesis; UDP-N-acetyl-alpha-D-glucosamine from N-acetyl-alpha-D-glucosamine 1-phosphate: step 1/1. It participates in bacterial outer membrane biogenesis; LPS lipid A biosynthesis. In terms of biological role, catalyzes the last two sequential reactions in the de novo biosynthetic pathway for UDP-N-acetylglucosamine (UDP-GlcNAc). The C-terminal domain catalyzes the transfer of acetyl group from acetyl coenzyme A to glucosamine-1-phosphate (GlcN-1-P) to produce N-acetylglucosamine-1-phosphate (GlcNAc-1-P), which is converted into UDP-GlcNAc by the transfer of uridine 5-monophosphate (from uridine 5-triphosphate), a reaction catalyzed by the N-terminal domain. This is Bifunctional protein GlmU from Burkholderia ambifaria (strain MC40-6).